The chain runs to 417 residues: Tyrosine--tRNA ligase (417 aa).

L-tyrosine is bound at residue Tyr-39. Positions 44 to 53 (ATATSLHIGN) match the 'HIGH' region motif. L-tyrosine contacts are provided by Tyr-176 and Gln-180. A 'KMSKS' region motif is present at residues 236–240 (KMGKS). Lys-239 contacts ATP. The S4 RNA-binding domain occupies 350–416 (IGILSLLVTA…GKKKHVLVRP (67 aa)).

Belongs to the class-I aminoacyl-tRNA synthetase family. TyrS type 1 subfamily. In terms of assembly, homodimer.

The protein resides in the cytoplasm. The catalysed reaction is tRNA(Tyr) + L-tyrosine + ATP = L-tyrosyl-tRNA(Tyr) + AMP + diphosphate + H(+). Functionally, catalyzes the attachment of tyrosine to tRNA(Tyr) in a two-step reaction: tyrosine is first activated by ATP to form Tyr-AMP and then transferred to the acceptor end of tRNA(Tyr). The chain is Tyrosine--tRNA ligase from Mesorhizobium japonicum (strain LMG 29417 / CECT 9101 / MAFF 303099) (Mesorhizobium loti (strain MAFF 303099)).